A 148-amino-acid polypeptide reads, in one-letter code: Deoxyuridine 5'-triphosphate nucleotidohydrolase (148 aa).

Substrate contacts are provided by residues 68–70 (RSG), Asn81, 85–87 (TID), and Lys95.

It belongs to the dUTPase family. Requires Mg(2+) as cofactor.

It carries out the reaction dUTP + H2O = dUMP + diphosphate + H(+). It functions in the pathway pyrimidine metabolism; dUMP biosynthesis; dUMP from dCTP (dUTP route): step 2/2. Functionally, this enzyme is involved in nucleotide metabolism: it produces dUMP, the immediate precursor of thymidine nucleotides and it decreases the intracellular concentration of dUTP so that uracil cannot be incorporated into DNA. This chain is Deoxyuridine 5'-triphosphate nucleotidohydrolase, found in Rickettsia conorii (strain ATCC VR-613 / Malish 7).